The following is a 706-amino-acid chain: Elongation factor G (706 aa).

The tr-type G domain maps to Ser8–Asn297. GTP is bound by residues Ala17–Thr24, Asp95–His99, and Asn149–Asp152.

The protein belongs to the TRAFAC class translation factor GTPase superfamily. Classic translation factor GTPase family. EF-G/EF-2 subfamily.

The protein localises to the cytoplasm. Catalyzes the GTP-dependent ribosomal translocation step during translation elongation. During this step, the ribosome changes from the pre-translocational (PRE) to the post-translocational (POST) state as the newly formed A-site-bound peptidyl-tRNA and P-site-bound deacylated tRNA move to the P and E sites, respectively. Catalyzes the coordinated movement of the two tRNA molecules, the mRNA and conformational changes in the ribosome. This is Elongation factor G from Orientia tsutsugamushi (strain Boryong) (Rickettsia tsutsugamushi).